We begin with the raw amino-acid sequence, 323 residues long: Acetyl-coenzyme A carboxylase carboxyl transferase subunit alpha (323 aa).

The CoA carboxyltransferase C-terminal domain maps to asparagine 32–serine 293.

The protein belongs to the AccA family. Acetyl-CoA carboxylase is a heterohexamer composed of biotin carboxyl carrier protein (AccB), biotin carboxylase (AccC) and two subunits each of ACCase subunit alpha (AccA) and ACCase subunit beta (AccD).

Its subcellular location is the cytoplasm. The catalysed reaction is N(6)-carboxybiotinyl-L-lysyl-[protein] + acetyl-CoA = N(6)-biotinyl-L-lysyl-[protein] + malonyl-CoA. The protein operates within lipid metabolism; malonyl-CoA biosynthesis; malonyl-CoA from acetyl-CoA: step 1/1. Component of the acetyl coenzyme A carboxylase (ACC) complex. First, biotin carboxylase catalyzes the carboxylation of biotin on its carrier protein (BCCP) and then the CO(2) group is transferred by the carboxyltransferase to acetyl-CoA to form malonyl-CoA. This Alcanivorax borkumensis (strain ATCC 700651 / DSM 11573 / NCIMB 13689 / SK2) protein is Acetyl-coenzyme A carboxylase carboxyl transferase subunit alpha.